A 93-amino-acid chain; its full sequence is uncharacterized protein (93 aa).

This is an uncharacterized protein from Enterobacter agglomerans (Erwinia herbicola).